The following is a 427-amino-acid chain: 3-phosphoshikimate 1-carboxyvinyltransferase (427 aa).

Lys22, Ser23, and Arg27 together coordinate 3-phosphoshikimate. Lys22 provides a ligand contact to phosphoenolpyruvate. Residues Gly96 and Arg124 each contribute to the phosphoenolpyruvate site. 7 residues coordinate 3-phosphoshikimate: Ser169, Ser170, Gln171, Ser197, Asp313, Asn336, and Lys340. Gln171 contacts phosphoenolpyruvate. Asp313 functions as the Proton acceptor in the catalytic mechanism. The phosphoenolpyruvate site is built by Arg344, Arg386, and Lys411.

It belongs to the EPSP synthase family. Monomer.

The protein localises to the cytoplasm. The catalysed reaction is 3-phosphoshikimate + phosphoenolpyruvate = 5-O-(1-carboxyvinyl)-3-phosphoshikimate + phosphate. The protein operates within metabolic intermediate biosynthesis; chorismate biosynthesis; chorismate from D-erythrose 4-phosphate and phosphoenolpyruvate: step 6/7. Catalyzes the transfer of the enolpyruvyl moiety of phosphoenolpyruvate (PEP) to the 5-hydroxyl of shikimate-3-phosphate (S3P) to produce enolpyruvyl shikimate-3-phosphate and inorganic phosphate. This is 3-phosphoshikimate 1-carboxyvinyltransferase from Escherichia coli O9:H4 (strain HS).